The chain runs to 312 residues: MNQTIKHISVMKKELIESLKIKKNGIYIDGTFGMGGHALSILKTIGREGRLYAIDRDPNSVFIGNQIKDKRFHIIHSNFSKILNYAKYNNIIGKVNGILFDLGTSSLQIENEKRGFSFKKNGPLDMRMNPHAGISASEWLFKSDINKIYFVLKNFGEERFSKRIAYAIKDYCKKKKINNTFELVDIIKKATPIKNKFKHPAKRTFQAIRIYINQELEEIKKGLENSLKILKPGGRLSIISFHSLEDRIVKNFMMKYSKKATVPYGLPITENKLETLRICKLKIINRIFPTQKEIEKNPRARSSVLRTAELKE.

Residues 35–37 (GGH), D55, F79, D101, and Q108 contribute to the S-adenosyl-L-methionine site.

This sequence belongs to the methyltransferase superfamily. RsmH family.

The protein localises to the cytoplasm. The catalysed reaction is cytidine(1402) in 16S rRNA + S-adenosyl-L-methionine = N(4)-methylcytidine(1402) in 16S rRNA + S-adenosyl-L-homocysteine + H(+). Functionally, specifically methylates the N4 position of cytidine in position 1402 (C1402) of 16S rRNA. The sequence is that of Ribosomal RNA small subunit methyltransferase H from Buchnera aphidicola subsp. Schizaphis graminum (strain Sg).